A 428-amino-acid chain; its full sequence is Palmitoyltransferase pfa4 (428 aa).

Over 1–10 (MLCRSFNISQ) the chain is Cytoplasmic. Residues 11–31 (LAIPFVSVLISFLAYTSQLFF) traverse the membrane as a helical segment. Residues 32–43 (YYFEEAPLRSEE) are Lumenal-facing. Residues 44–61 (FWRLNIFAVCIWVCYYRA) traverse the membrane as a helical segment. At 62 to 134 (CTVDPGRIPK…SNCVSHFTYP (73 aa)) the chain is on the cytoplasmic side. In terms of domain architecture, DHHC spans 91 to 141 (RWCRRCEAFKPPRAHHCKTCQRCIPKMDHHCPWTSNCVSHFTYPHFMRFLF). The active-site S-palmitoyl cysteine intermediate is the C121. The chain crosses the membrane as a helical span at residues 135–155 (HFMRFLFYAVVGMGYLETLLF). Residues 156–177 (ERASIVWASRHLPSYLGPGLGQ) lie on the Lumenal side of the membrane. The helical transmembrane segment at 178-198 (LVHLFILLVVNSLTWLALFIL) threads the bilayer. The Cytoplasmic portion of the chain corresponds to 199–428 (LLRSIWSLAL…GILMQRRRQQ (230 aa)). Positions 339–400 (QRSNDASHSG…WKNSEGDRLR (62 aa)) are disordered. Positions 360–373 (DRFNENKAKERLSE) are enriched in basic and acidic residues. Residues 374 to 388 (SESDFSDDEEVQDGE) are compositionally biased toward acidic residues. Residues 389-400 (EGWKNSEGDRLR) are compositionally biased toward basic and acidic residues.

Belongs to the DHHC palmitoyltransferase family. PFA4 subfamily.

The protein resides in the endoplasmic reticulum membrane. It catalyses the reaction L-cysteinyl-[protein] + hexadecanoyl-CoA = S-hexadecanoyl-L-cysteinyl-[protein] + CoA. Its function is as follows. Mediates the reversible addition of palmitate to target proteins, thereby regulating their membrane association and biological function. The sequence is that of Palmitoyltransferase pfa4 from Aspergillus fumigatus (strain ATCC MYA-4609 / CBS 101355 / FGSC A1100 / Af293) (Neosartorya fumigata).